The chain runs to 493 residues: Malonyl-CoA decarboxylase, mitochondrial (493 aa).

The N-terminal 39 residues, 1-39, are a transit peptide targeting the mitochondrion; the sequence is MRGFGPGLTARRLLPLRLPPRPPGPRLASGQAAGALERA. The tract at residues 40–190 is alpha-helical domain; it reads MDELLRRAVP…VLKGMLSEWF (151 aa). The residue at position 59 (K59) is an N6-acetyllysine. K168 carries the post-translational modification N6-acetyllysine; alternate. K168 is modified (N6-succinyllysine; alternate). Positions 191–493 are catalytic domain; the sequence is SSGFLNLERV…VAQFQKNSKL (303 aa). K211 is modified (N6-acetyllysine). N6-succinyllysine is present on K222. Malonyl-CoA contacts are provided by residues 299–305 and S329; that span reads QGVELGT. The Proton acceptor role is filled by S329. K389 is subject to N6-acetyllysine. H423 contacts malonyl-CoA. H423 acts as the Proton donor in catalysis. Position 472 is an N6-acetyllysine (K472). Residues 491–493 carry the Microbody targeting signal motif; it reads SKL.

Homotetramer. Dimer of dimers. The two subunits within a dimer display conformational differences suggesting that at any given moment, only one of the two subunits is competent for malonyl-CoA binding and catalytic activity. Under oxidizing conditions, can form disulfide-linked homotetramers (in vitro). Associates with the peroxisomal targeting signal receptor PEX5. Post-translationally, acetylation at Lys-472 activates malonyl-CoA decarboxylase activity. Deacetylation at Lys-472 by SIRT4 represses activity, leading to promote lipogenesis. In terms of processing, interchain disulfide bonds may form in peroxisomes (Potential). Interchain disulfide bonds are not expected to form in the reducing environment of the cytoplasm and mitochondria. In terms of tissue distribution, expressed in fibroblasts and hepatoblastoma cells (at protein level). Expressed strongly in heart, liver, skeletal muscle, kidney and pancreas. Expressed in myotubes. Expressed weakly in brain, placenta, spleen, thymus, testis, ovary and small intestine.

The protein resides in the cytoplasm. It localises to the mitochondrion matrix. It is found in the peroxisome. Its subcellular location is the peroxisome matrix. It carries out the reaction malonyl-CoA + H(+) = acetyl-CoA + CO2. It functions in the pathway metabolic intermediate biosynthesis; acetyl-CoA biosynthesis; acetyl-CoA from malonyl-CoA: step 1/1. Its activity is regulated as follows. Malonyl-CoA decarboxylase activity does not require any cofactors or divalent metal ions. Formation of interchain disulfide bonds leads to positive cooperativity between active sites and increases the affinity for malonyl-CoA and the catalytic efficiency (in vitro). Its function is as follows. Catalyzes the conversion of malonyl-CoA to acetyl-CoA. In the fatty acid biosynthesis MCD selectively removes malonyl-CoA and thus assures that methyl-malonyl-CoA is the only chain elongating substrate for fatty acid synthase and that fatty acids with multiple methyl side chains are produced. In peroxisomes it may be involved in degrading intraperoxisomal malonyl-CoA, which is generated by the peroxisomal beta-oxidation of odd chain-length dicarboxylic fatty acids. Plays a role in the metabolic balance between glucose and lipid oxidation in muscle independent of alterations in insulin signaling. May play a role in controlling the extent of ischemic injury by promoting glucose oxidation. This chain is Malonyl-CoA decarboxylase, mitochondrial, found in Homo sapiens (Human).